The following is a 203-amino-acid chain: Probable deoxycytidylate deaminase (203 aa).

The region spanning 27–163 (HWDDYFMATS…PTYRASKRML (137 aa)) is the CMP/dCMP-type deaminase domain. A Zn(2+)-binding site is contributed by His102. Glu104 (proton donor) is an active-site residue. Zn(2+)-binding residues include Cys128 and Cys131.

It belongs to the cytidine and deoxycytidylate deaminase family. Requires Zn(2+) as cofactor.

The catalysed reaction is dCMP + H2O + H(+) = dUMP + NH4(+). Its function is as follows. Supplies the nucleotide substrate for thymidylate synthetase. The polypeptide is Probable deoxycytidylate deaminase (Drosophila melanogaster (Fruit fly)).